The chain runs to 617 residues: Regulatory solute carrier protein family 1 member 1 (617 aa).

Positions Met-1–Asp-22 are enriched in polar residues. Disordered regions lie at residues Met-1–Val-106, Glu-155–Gln-181, and Lys-217–Ser-237. 2 stretches are compositionally biased toward basic and acidic residues: residues Ser-43–Ala-52 and Ser-66–Ser-83. Polar residues-rich tracts occupy residues Thr-89–Glu-103 and Glu-155–Pro-165. Residues Gln-410–Pro-412 form an involved in post-transcriptional down-regulation of SLC5A1 region. The UBA domain occupies Ile-571–Lys-611.

As to quaternary structure, interacts with YRDC. Expressed in small intestine, kidney and brain.

It is found in the cell membrane. The protein localises to the nucleus. It localises to the golgi apparatus. Its subcellular location is the trans-Golgi network. Its function is as follows. Mediates transcriptional and post-transcriptional regulation of SLC5A1. Inhibits a dynamin and PKC-dependent exocytotic pathway of SLC5A1. Also involved in transcriptional regulation of SLC22A2. Exhibits glucose-dependent, short-term inhibition of SLC5A1 and SLC22A2 by inhibiting the release of vesicles from the trans-Golgi network. This chain is Regulatory solute carrier protein family 1 member 1 (RSC1A1), found in Homo sapiens (Human).